A 190-amino-acid chain; its full sequence is Peptidyl-tRNA hydrolase (190 aa).

Residue Tyr14 coordinates tRNA. The active-site Proton acceptor is His19. Residues Tyr64, Asn66, and Asn113 each contribute to the tRNA site.

The protein belongs to the PTH family. As to quaternary structure, monomer.

Its subcellular location is the cytoplasm. The enzyme catalyses an N-acyl-L-alpha-aminoacyl-tRNA + H2O = an N-acyl-L-amino acid + a tRNA + H(+). Functionally, hydrolyzes ribosome-free peptidyl-tRNAs (with 1 or more amino acids incorporated), which drop off the ribosome during protein synthesis, or as a result of ribosome stalling. Catalyzes the release of premature peptidyl moieties from peptidyl-tRNA molecules trapped in stalled 50S ribosomal subunits, and thus maintains levels of free tRNAs and 50S ribosomes. This chain is Peptidyl-tRNA hydrolase, found in Gemmatimonas aurantiaca (strain DSM 14586 / JCM 11422 / NBRC 100505 / T-27).